Here is an 840-residue protein sequence, read N- to C-terminus: Homeobox-leucine zipper protein HOX9 (840 aa).

Disordered regions lie at residues 1–26 (MAAA…AGMD) and 135–160 (NPSL…DASN). Positions 12–21 (GSDGGGGGYD) are enriched in gly residues. Residues 26–89 (DSGKYVRYTP…NRRCRDKQRK (64 aa)) constitute a DNA-binding region (homeobox). A coiled-coil region spans residues 86 to 135 (KQRKEASRLQAVNRKLTAMNKLLMEENERLQKQVSQLVHENAYMKQQLQN). Residues 157 to 385 (DASNPSGLLT…IAQETSGEVV (229 aa)) enclose the START domain.

It belongs to the HD-ZIP homeobox family. Class III subfamily. As to expression, expressed in seedlings, roots, stems, leaf sheaths and blades and panicles.

The protein resides in the nucleus. In terms of biological role, probable transcription factor. This Oryza sativa subsp. indica (Rice) protein is Homeobox-leucine zipper protein HOX9 (HOX9).